The following is a 78-amino-acid chain: Large ribosomal subunit protein bL28 (78 aa).

This sequence belongs to the bacterial ribosomal protein bL28 family.

This Gloeothece citriformis (strain PCC 7424) (Cyanothece sp. (strain PCC 7424)) protein is Large ribosomal subunit protein bL28.